A 160-amino-acid chain; its full sequence is S-ribosylhomocysteine lyase (160 aa).

His57, His61, and Cys127 together coordinate Fe cation.

This sequence belongs to the LuxS family. In terms of assembly, homodimer. The cofactor is Fe cation.

It carries out the reaction S-(5-deoxy-D-ribos-5-yl)-L-homocysteine = (S)-4,5-dihydroxypentane-2,3-dione + L-homocysteine. In terms of biological role, involved in the synthesis of autoinducer 2 (AI-2) which is secreted by bacteria and is used to communicate both the cell density and the metabolic potential of the environment. The regulation of gene expression in response to changes in cell density is called quorum sensing. Catalyzes the transformation of S-ribosylhomocysteine (RHC) to homocysteine (HC) and 4,5-dihydroxy-2,3-pentadione (DPD). The protein is S-ribosylhomocysteine lyase of Streptococcus pyogenes serotype M2 (strain MGAS10270).